Reading from the N-terminus, the 373-residue chain is Anhydro-N-acetylmuramic acid kinase (373 aa).

12–19 lines the ATP pocket; that stretch reads GTSLDGVD.

It belongs to the anhydro-N-acetylmuramic acid kinase family.

The catalysed reaction is 1,6-anhydro-N-acetyl-beta-muramate + ATP + H2O = N-acetyl-D-muramate 6-phosphate + ADP + H(+). It participates in amino-sugar metabolism; 1,6-anhydro-N-acetylmuramate degradation. The protein operates within cell wall biogenesis; peptidoglycan recycling. Functionally, catalyzes the specific phosphorylation of 1,6-anhydro-N-acetylmuramic acid (anhMurNAc) with the simultaneous cleavage of the 1,6-anhydro ring, generating MurNAc-6-P. Is required for the utilization of anhMurNAc either imported from the medium or derived from its own cell wall murein, and thus plays a role in cell wall recycling. The sequence is that of Anhydro-N-acetylmuramic acid kinase from Erwinia tasmaniensis (strain DSM 17950 / CFBP 7177 / CIP 109463 / NCPPB 4357 / Et1/99).